Here is a 289-residue protein sequence, read N- to C-terminus: Phosphatidylserine decarboxylase proenzyme (289 aa).

Active-site charge relay system; for autoendoproteolytic cleavage activity residues include aspartate 89, histidine 146, and serine 252. The Schiff-base intermediate with substrate; via pyruvic acid; for decarboxylase activity role is filled by serine 252. Serine 252 bears the Pyruvic acid (Ser); by autocatalysis mark.

The protein belongs to the phosphatidylserine decarboxylase family. PSD-B subfamily. Prokaryotic type I sub-subfamily. Heterodimer of a large membrane-associated beta subunit and a small pyruvoyl-containing alpha subunit. Pyruvate serves as cofactor. Post-translationally, is synthesized initially as an inactive proenzyme. Formation of the active enzyme involves a self-maturation process in which the active site pyruvoyl group is generated from an internal serine residue via an autocatalytic post-translational modification. Two non-identical subunits are generated from the proenzyme in this reaction, and the pyruvate is formed at the N-terminus of the alpha chain, which is derived from the carboxyl end of the proenzyme. The autoendoproteolytic cleavage occurs by a canonical serine protease mechanism, in which the side chain hydroxyl group of the serine supplies its oxygen atom to form the C-terminus of the beta chain, while the remainder of the serine residue undergoes an oxidative deamination to produce ammonia and the pyruvoyl prosthetic group on the alpha chain. During this reaction, the Ser that is part of the protease active site of the proenzyme becomes the pyruvoyl prosthetic group, which constitutes an essential element of the active site of the mature decarboxylase.

Its subcellular location is the cell membrane. The catalysed reaction is a 1,2-diacyl-sn-glycero-3-phospho-L-serine + H(+) = a 1,2-diacyl-sn-glycero-3-phosphoethanolamine + CO2. It functions in the pathway phospholipid metabolism; phosphatidylethanolamine biosynthesis; phosphatidylethanolamine from CDP-diacylglycerol: step 2/2. Functionally, catalyzes the formation of phosphatidylethanolamine (PtdEtn) from phosphatidylserine (PtdSer). The chain is Phosphatidylserine decarboxylase proenzyme from Nitrosospira multiformis (strain ATCC 25196 / NCIMB 11849 / C 71).